The primary structure comprises 343 residues: Anthranilate phosphoribosyltransferase (343 aa).

Residues Gly86, 89-90 (GD), Thr94, 96-99 (NIST), 114-122 (KHGNKSASG), and Ser126 each bind 5-phospho-alpha-D-ribose 1-diphosphate. Residue Gly86 coordinates anthranilate. Ser98 lines the Mg(2+) pocket. Anthranilate is bound at residue Asn117. Arg172 lines the anthranilate pocket. Mg(2+) contacts are provided by Asp231 and Glu232.

The protein belongs to the anthranilate phosphoribosyltransferase family. As to quaternary structure, homodimer. Mg(2+) serves as cofactor.

It catalyses the reaction N-(5-phospho-beta-D-ribosyl)anthranilate + diphosphate = 5-phospho-alpha-D-ribose 1-diphosphate + anthranilate. The protein operates within amino-acid biosynthesis; L-tryptophan biosynthesis; L-tryptophan from chorismate: step 2/5. Its function is as follows. Catalyzes the transfer of the phosphoribosyl group of 5-phosphorylribose-1-pyrophosphate (PRPP) to anthranilate to yield N-(5'-phosphoribosyl)-anthranilate (PRA). This Prochlorococcus marinus subsp. pastoris (strain CCMP1986 / NIES-2087 / MED4) protein is Anthranilate phosphoribosyltransferase.